Reading from the N-terminus, the 576-residue chain is Keratin, type II cytoskeletal 5 (576 aa).

The tract at residues 1–163 (MSRQSSVSFR…DPTIQRVRTE (163 aa)) is head. 4 positions are modified to phosphoserine: Ser-5, Ser-8, Ser-16, and Ser-21. Thr-24 carries the phosphothreonine; by CDK1 modification. Ser-26, Ser-36, Ser-46, Ser-60, Ser-67, Ser-71, Ser-74, and Ser-78 each carry phosphoserine. At Thr-147 the chain carries Phosphothreonine; by CDK1. The residue at position 162 (Thr-162) is a Phosphothreonine; by AURKB. The coil 1A stretch occupies residues 164-199 (EREQIKTLNNKFASFIDKVRFLEQQNKVLDTKWTLL). The IF rod domain occupies 164 to 477 (EREQIKTLNN…KLLEGEECRL (314 aa)). A linker 1 region spans residues 200-218 (QEQGTKTIKQNLDPLFEQY). The coil 1B stretch occupies residues 219-311 (INNLRRQLDG…FFDAELSQMQ (93 aa)). The tract at residues 312–334 (THVSDTSVVLSMDNNRSLDLDSI) is linker 12. The interval 335 to 473 (IAEVKAQYED…ATYRKLLEGE (139 aa)) is coil 2. Residues 474–576 (ECRLSGEGVG…TSSSRRSFKS (103 aa)) are tail. Position 527 is an omega-N-methylarginine (Arg-527). Residues 540-557 (GFSASSGQGGGFSSGGGS) are compositionally biased toward gly residues. A disordered region spans residues 540-576 (GFSASSGQGGGFSSGGGSSSSVKFVSTTSSSRRSFKS). Over residues 558–576 (SSSVKFVSTTSSSRRSFKS) the composition is skewed to low complexity.

The protein belongs to the intermediate filament family. Heterodimer of a type I and a type II keratin. Heterodimer with type I keratin KRT25 leading to the formation of keratin intermediate filament (KIF) network. Forms a heterodimer (via 2B domains) with KRT14 (via 2B domains). Interacts with TCHP. Interacts with EPPK1. Interacts with AMELX. Interacts with PKP1 (via N-terminus) and PKP2. Phosphorylated by CDK1, AURKB and Rho-kinase, phosphorylation is regulated by the cell cycle. Thr-24 phosphorylation, mediated by CDK1, peaks during prometaphase or metaphase cells with phosphorylated filamentous structures evident throughout the cytoplasm during early mitosis. CDK1 phosphorylates Thr-24 in mitotic cells at the site of injury. In terms of processing, O-glycosylated. Expressed in the epidermis (at protein level) and testis (within pachytene spermatocytes).

The protein resides in the cytoplasm. Required for the formation of keratin intermediate filaments in the basal epidermis and maintenance of the skin barrier in response to mechanical stress. Regulates the recruitment of Langerhans cells to the epidermis, potentially by modulation of the abundance of macrophage chemotactic cytokines, macrophage inflammatory cytokines and CTNND1 localization in keratinocytes. This chain is Keratin, type II cytoskeletal 5, found in Rattus norvegicus (Rat).